The chain runs to 387 residues: Acetylserotonin O-methyltransferase (387 aa).

S-adenosyl-L-methionine is bound by residues Y153, W170, E216, 246–248 (GDF), and R263. H266 serves as the catalytic Proton donor/acceptor. 2 residues coordinate substrate: D267 and Q317. A disordered region spans residues 354–387 (AARGGGAGARSDGGGGDATSQTGSGTGSEVGAQD). Over residues 356–370 (RGGGAGARSDGGGGD) the composition is skewed to gly residues.

It belongs to the class I-like SAM-binding methyltransferase superfamily. Cation-independent O-methyltransferase family. As to quaternary structure, homodimer. In terms of tissue distribution, expressed predominantly in the pineal gland (at protein level). Very low expression, if any, in the retina.

It catalyses the reaction N-acetylserotonin + S-adenosyl-L-methionine = melatonin + S-adenosyl-L-homocysteine + H(+). The protein operates within aromatic compound metabolism; melatonin biosynthesis; melatonin from serotonin: step 1/2. Catalyzes the transfer of a methyl group onto N-acetylserotonin, producing melatonin (N-acetyl-5-methoxytryptamine). In Mus musculus (Mouse), this protein is Acetylserotonin O-methyltransferase (Asmt).